We begin with the raw amino-acid sequence, 908 residues long: Alanine--tRNA ligase (908 aa).

4 residues coordinate Zn(2+): H596, H600, C698, and H702.

It belongs to the class-II aminoacyl-tRNA synthetase family. Zn(2+) serves as cofactor.

The protein localises to the cytoplasm. It carries out the reaction tRNA(Ala) + L-alanine + ATP = L-alanyl-tRNA(Ala) + AMP + diphosphate. Catalyzes the attachment of alanine to tRNA(Ala) in a two-step reaction: alanine is first activated by ATP to form Ala-AMP and then transferred to the acceptor end of tRNA(Ala). Also edits incorrectly charged Ser-tRNA(Ala) and Gly-tRNA(Ala) via its editing domain. This chain is Alanine--tRNA ligase, found in Lysinibacillus sphaericus (strain C3-41).